The sequence spans 147 residues: Small ribosomal subunit protein uS12 (147 aa).

It belongs to the universal ribosomal protein uS12 family. As to quaternary structure, part of the 30S ribosomal subunit.

In terms of biological role, with S4 and S5 plays an important role in translational accuracy. Located at the interface of the 30S and 50S subunits. The sequence is that of Small ribosomal subunit protein uS12 from Pyrobaculum calidifontis (strain DSM 21063 / JCM 11548 / VA1).